Here is a 461-residue protein sequence, read N- to C-terminus: Putative dipeptidase CPSG_01350 (461 aa).

The segment covering 1 to 10 (MSARDNEKGS) has biased composition (basic and acidic residues). A disordered region spans residues 1-31 (MSARDNEKGSARSQPSHAAASEIENVPRPSR). Residues 35 to 52 (WTGTMIKVFIICACAGIV) form a helical membrane-spanning segment. Positions 90, 92, and 203 each coordinate Zn(2+). Cysteines 142 and 232 form a disulfide. His230 is a substrate binding site. Zn(2+) is bound by residues His274 and His295. The substrate site is built by Arg306 and Asp366. The N-linked (GlcNAc...) asparagine glycan is linked to Asn379.

The protein belongs to the metallo-dependent hydrolases superfamily. Peptidase M19 family. Zn(2+) is required as a cofactor.

Its subcellular location is the membrane. The enzyme catalyses an L-aminoacyl-L-amino acid + H2O = 2 an L-alpha-amino acid. Hydrolyzes a wide range of dipeptides. The chain is Putative dipeptidase CPSG_01350 from Coccidioides posadasii (strain RMSCC 757 / Silveira) (Valley fever fungus).